The sequence spans 321 residues: AA9 family lytic polysaccharide monooxygenase D (321 aa).

The first 21 residues, 1–21 (MRSTIVATFAAGLVVASLVAA), serve as a signal peptide directing secretion. Position 22 (His-22) interacts with Cu(2+). Cystine bridges form between Cys-75–Cys-192 and Cys-116–Cys-120. Residue Asn-78 is glycosylated (N-linked (GlcNAc...) asparagine). His-105 is a binding site for Cu(2+). The N-linked (GlcNAc...) asparagine glycan is linked to Asn-152. O2 is bound by residues His-178 and Gln-187. Tyr-189 contacts Cu(2+). Asn-266 is a glycosylation site (N-linked (GlcNAc...) asparagine).

The protein belongs to the polysaccharide monooxygenase AA9 family. It depends on Cu(2+) as a cofactor.

It is found in the secreted. It carries out the reaction [(1-&gt;4)-beta-D-glucosyl]n+m + reduced acceptor + O2 = 4-dehydro-beta-D-glucosyl-[(1-&gt;4)-beta-D-glucosyl]n-1 + [(1-&gt;4)-beta-D-glucosyl]m + acceptor + H2O.. In terms of biological role, lytic polysaccharide monooxygenase (LPMO) that depolymerizes crystalline and amorphous polysaccharides via the oxidation of scissile alpha- or beta-(1-4)-glycosidic bonds, yielding C1 or C4 oxidation products. Catalysis by LPMOs requires the reduction of the active-site copper from Cu(II) to Cu(I) by a reducing agent and H(2)O(2) or O(2) as a cosubstrate. The sequence is that of AA9 family lytic polysaccharide monooxygenase D from Geotrichum candidum (Oospora lactis).